An 807-amino-acid polypeptide reads, in one-letter code: Zinc finger protein 594 (807 aa).

Residues 1–23 (MKEWKSKMEISEEKKSARAASEK) are disordered. 8 C2H2-type zinc fingers span residues 127 to 149 (YECK…QRIH), 155 to 177 (YVCN…QRIH), 183 to 205 (YICH…KQIH), 211 to 233 (YECK…QRIH), 239 to 261 (YLCN…HRIH), 267 to 289 (YECY…QRIH), 295 to 317 (LKCN…QRLH), and 323 to 345 (YECH…QRLH). The C2H2-type 9; degenerate zinc-finger motif lies at 348 to 370 (EKIEECEKTFSKDEELREEQRIH). 6 C2H2-type zinc fingers span residues 376-398 (YWCN…QVTH), 404-426 (YECK…HRIH), 432-454 (CVCS…HRVH), 460-482 (YECS…QKIH), 488-510 (YQCT…RRIH), and 516-538 (YECK…QSLH). Residues 543 to 562 (LECEKTFSQDEELRGEQKIH) form a C2H2-type 16; degenerate zinc finger. 6 consecutive C2H2-type zinc fingers follow at residues 568–590 (YWCN…QVTH), 596–618 (YECK…HRIH), 624–646 (YVCN…HRIH), 652–674 (YECS…QKIH), 680–702 (YQCS…RRLH), and 708–730 (YECK…QRLH). The C2H2-type 23; degenerate zinc finger occupies 733 to 755 (EKLEECEKTFSKDEELRKEQRTH). A C2H2-type 24 zinc finger spans residues 761 to 783 (YWCNQCSRTFQGSSDLIRHQVTH).

This sequence belongs to the krueppel C2H2-type zinc-finger protein family.

The protein localises to the nucleus. Its function is as follows. May be involved in transcriptional regulation. The chain is Zinc finger protein 594 (ZNF594) from Homo sapiens (Human).